Here is a 357-residue protein sequence, read N- to C-terminus: Pre-mRNA-splicing factor RBM22 homolog (357 aa).

A C3H1-type zinc finger spans residues 153–180 (RNMARVCSFWRKNSCNRGDECPYLHKEI). The RRM domain occupies 222 to 295 (NKICIQGISE…CNLTVHLQDN (74 aa)).

The protein belongs to the SLT11 family. In terms of assembly, probable component of the spliceosome C complex.

The protein localises to the nucleus. Functionally, involved in pre-mRNA splicing. Binds RNA. The polypeptide is Pre-mRNA-splicing factor RBM22 homolog (Plasmodium falciparum (isolate 3D7)).